An 81-amino-acid polypeptide reads, in one-letter code: ATP synthase subunit c, chloroplastic (81 aa).

2 consecutive transmembrane segments (helical) span residues 3–23 (PLISAASVIAAGLAVGLASIG) and 53–73 (LLLSLAFMEALTIYGLVVALA).

The protein belongs to the ATPase C chain family. F-type ATPases have 2 components, F(1) - the catalytic core - and F(0) - the membrane proton channel. F(1) has five subunits: alpha(3), beta(3), gamma(1), delta(1), epsilon(1). F(0) has four main subunits: a(1), b(1), b'(1) and c(10-14). The alpha and beta chains form an alternating ring which encloses part of the gamma chain. F(1) is attached to F(0) by a central stalk formed by the gamma and epsilon chains, while a peripheral stalk is formed by the delta, b and b' chains.

Its subcellular location is the plastid. It localises to the chloroplast thylakoid membrane. Functionally, f(1)F(0) ATP synthase produces ATP from ADP in the presence of a proton or sodium gradient. F-type ATPases consist of two structural domains, F(1) containing the extramembraneous catalytic core and F(0) containing the membrane proton channel, linked together by a central stalk and a peripheral stalk. During catalysis, ATP synthesis in the catalytic domain of F(1) is coupled via a rotary mechanism of the central stalk subunits to proton translocation. Its function is as follows. Key component of the F(0) channel; it plays a direct role in translocation across the membrane. A homomeric c-ring of between 10-14 subunits forms the central stalk rotor element with the F(1) delta and epsilon subunits. The chain is ATP synthase subunit c, chloroplastic from Huperzia lucidula (Shining clubmoss).